The chain runs to 125 residues: Large ribosomal subunit protein eL31 (125 aa).

This sequence belongs to the eukaryotic ribosomal protein eL31 family. In terms of assembly, component of the large ribosomal subunit.

The protein localises to the cytoplasm. Component of the large ribosomal subunit. The ribosome is a large ribonucleoprotein complex responsible for the synthesis of proteins in the cell. This is Large ribosomal subunit protein eL31 (rpl31) from Ictalurus punctatus (Channel catfish).